A 275-amino-acid polypeptide reads, in one-letter code: Expansin-A23 (275 aa).

The first 27 residues, 1–27 (MNLLGKMIYVEGFMMIMATLLVSMSYG), serve as a signal peptide directing secretion. The Expansin-like EG45 domain maps to 72 to 182 (QGACGYGDLF…RRISCARTGG (111 aa)). One can recognise an Expansin-like CBD domain in the interval 192–271 (YFLMILPYNV…NWGFGQTFDG (80 aa)).

This sequence belongs to the expansin family. Expansin A subfamily.

Its subcellular location is the secreted. The protein localises to the cell wall. It localises to the membrane. Its function is as follows. Causes loosening and extension of plant cell walls by disrupting non-covalent bonding between cellulose microfibrils and matrix glucans. No enzymatic activity has been found. In Arabidopsis thaliana (Mouse-ear cress), this protein is Expansin-A23 (EXPA23).